Reading from the N-terminus, the 104-residue chain is DNA-directed RNA polymerase subunit omega (104 aa).

This sequence belongs to the RNA polymerase subunit omega family. In terms of assembly, the RNAP catalytic core consists of 2 alpha, 1 beta, 1 beta' and 1 omega subunit. When a sigma factor is associated with the core the holoenzyme is formed, which can initiate transcription.

The catalysed reaction is RNA(n) + a ribonucleoside 5'-triphosphate = RNA(n+1) + diphosphate. Promotes RNA polymerase assembly. Latches the N- and C-terminal regions of the beta' subunit thereby facilitating its interaction with the beta and alpha subunits. In Streptococcus thermophilus (strain CNRZ 1066), this protein is DNA-directed RNA polymerase subunit omega.